Consider the following 354-residue polypeptide: MSLESVRYSRGSLQVLNQLLLPHKSEYEPVTGVQQGADAIRTMKVRGAPAIAIVGVLSLAVELTSRTCQDVPSFIAFVQESLCHLVDARPTAVNMKKAADELNAFLAKEAEKAGATTQGLAESVIQWAEALLKKDVEDNQMIGDFGAKHILETAGPTEKVCMLTHCNTGSLATAGYGTALGVVRSLHVLGRLSHVFCTETRPYNQGSRLTAYELVYEKIPATLITDSMASAAIRDRKVTAVVVGADRVVANGDTANKIGTYQLAITARYHGIPFYVAAPSTSCDLSLPTGGSIVIEERPSHELTDINGVRIAAPGIGVWNPAFDVTPHELITGIITERGVFKPEELRDGLTKGQ.

Asp246 serves as the catalytic Proton donor.

The protein belongs to the eIF-2B alpha/beta/delta subunits family. MtnA subfamily.

The protein resides in the cytoplasm. It localises to the nucleus. The enzyme catalyses 5-(methylsulfanyl)-alpha-D-ribose 1-phosphate = 5-(methylsulfanyl)-D-ribulose 1-phosphate. Its pathway is amino-acid biosynthesis; L-methionine biosynthesis via salvage pathway; L-methionine from S-methyl-5-thio-alpha-D-ribose 1-phosphate: step 1/6. In terms of biological role, catalyzes the interconversion of methylthioribose-1-phosphate (MTR-1-P) into methylthioribulose-1-phosphate (MTRu-1-P). The sequence is that of Methylthioribose-1-phosphate isomerase (mri1) from Xenopus tropicalis (Western clawed frog).